A 262-amino-acid chain; its full sequence is Homeobox protein vent1 (262 aa).

Composition is skewed to basic and acidic residues over residues 16 to 26 (REEAPDGKDSV) and 44 to 55 (YAKEIPRRKDGQ). The segment at 16–129 (REEAPDGKDS…KSPKSDLQRR (114 aa)) is disordered. The span at 58–79 (GEITSFQCSSEEARNRQFSNPS) shows a compositional bias: polar residues. The segment covering 114-128 (DTEHRSKSPKSDLQR) has biased composition (basic and acidic residues). A DNA-binding region (homeobox) is located at residues 127–186 (QRRLRTAFTPQQITRLEQAFNKQRYLGASERKKLATSLQLSEIQVKTWFQNRRMKLKRQI).

It is found in the nucleus. Transcriptional repressor. Cooperates with vent2 in a ventral signaling pathway downstream of bmp4, which antagonizes the Spemann organizer and dorsal mesoderm formation, and leads to ventral mesoderm formation. Acts downstream of bmp4 to repress transcription of foxa4-B/XFD-1'. Binds to DNA with preference for the target sequence 5'-CTATT[T/C]G-3'. Also binds 5'-TGCATTTTG-3' at a lower frequency, and occasionally 5'-TTGATC-3'. Binds to the homeobox 2 (HBX2) repressor element in the promoter of the myf5 gene. Cooperates with vent2 to repress myf5 expression in the ventral domain. The protein is Homeobox protein vent1 of Xenopus tropicalis (Western clawed frog).